Consider the following 474-residue polypeptide: Capsid vertex component 1 (474 aa).

The protein belongs to the herpesviridae CVC1 protein family. Interacts (via C-terminus) with capsid vertex component 2/CVC2.

The protein localises to the virion. It is found in the host nucleus. In terms of biological role, capsid vertex-specific component that plays a role during viral DNA encapsidation, assuring correct genome cleavage and presumably stabilizing capsids that contain full-length viral genomes. The chain is Capsid vertex component 1 from Alcelaphine herpesvirus 1 (strain C500) (AlHV-1).